The primary structure comprises 1026 residues: SWI/SNF-related matrix-associated actin-dependent regulator of chromatin subfamily A containing DEAD/H box 1 (1026 aa).

Met-1 carries the N-acetylmethionine modification. Positions 1–82 (MNLFNLDRFR…DNERKASISY (82 aa)) are disordered. The span at 7–19 (DRFRFEKRNKIEE) shows a compositional bias: basic and acidic residues. At Thr-54 the chain carries Phosphothreonine. Position 57 is a phosphoserine (Ser-57). Thr-71 is subject to Phosphothreonine. Residue Lys-77 forms a Glycyl lysine isopeptide (Lys-Gly) (interchain with G-Cter in SUMO2) linkage. Ser-79 bears the Phosphoserine mark. Residue Lys-84 forms a Glycyl lysine isopeptide (Lys-Gly) (interchain with G-Cter in SUMO2) linkage. Residues Ser-124, Ser-127, Ser-132, Ser-146, and Ser-152 each carry the phosphoserine modification. A CUE 1 domain is found at 157-199 (LKDAKLQTLKELFPQRSDNDLLKLIESTSTMDGAIAAALLMFG). Disordered regions lie at residues 203–251 (GGPR…NWEK) and 302–328 (SQSE…KTKL). 2 positions are modified to phosphoserine: Ser-211 and Ser-214. Phosphotyrosine is present on Tyr-217. The segment covering 226–238 (QSIKKTRLDHGEE) has biased composition (basic and acidic residues). A phosphoserine mark is found at Ser-239 and Ser-242. A CUE 2 domain is found at 251 to 294 (KQESIVLKLQKEFPNFDKQELREVLKEHEWMYTEALESLKVFAE). A Phosphoserine modification is found at Ser-302. Polar residues predominate over residues 314–323 (SRSQNYPKNA). Lys-335 participates in a covalent cross-link: Glycyl lysine isopeptide (Lys-Gly) (interchain with G-Cter in SUMO2). A disordered region spans residues 354-373 (VVEDSEYDSGSDVGSSLDED). A Glycyl lysine isopeptide (Lys-Gly) (interchain with G-Cter in SUMO2) cross-link involves residue Lys-471. The region spanning 509 to 677 (ALVHKHGLNG…MSLLNFVMPH (169 aa)) is the Helicase ATP-binding domain. An ATP-binding site is contributed by 521-529 (ADEMGLGKT). Positions 628–631 (DEGH) match the DEGH box motif. Residues 721 to 738 (RRVKEEVLKQLPPKKDRI) carry the Nuclear localization signal motif. Lys-724 participates in a covalent cross-link: Glycyl lysine isopeptide (Lys-Gly) (interchain with G-Cter in SUMO2). The Helicase C-terminal domain maps to 858–1010 (VLGCILSELK…MTTVDEGDEG (153 aa)). ATP is bound at residue 897–904 (YLRLDGKT). Residue Lys-996 forms a Glycyl lysine isopeptide (Lys-Gly) (interchain with G-Cter in SUMO2) linkage. A DEGD box motif is present at residues 1005-1008 (DEGD).

The protein belongs to the SNF2/RAD54 helicase family. Binds to DNA preferentially in the vicinity of transcriptional start sites. Interacts with MSH2 and TRIM28. Part of a complex composed of TRIM28, HDAC1, HDAC2 and EHMT2. Interacts with PCNA. Isoform 1 is expressed ubiquitously. Isoform 3 is expressed mainly in skin and esophagus. Expressed in fibroblasts and keratinocytes (at protein level).

The protein localises to the nucleus. It is found in the chromosome. It carries out the reaction ATP + H2O = ADP + phosphate + H(+). Functionally, DNA helicase that possesses intrinsic ATP-dependent nucleosome-remodeling activity and is both required for DNA repair and heterochromatin organization. Promotes DNA end resection of double-strand breaks (DSBs) following DNA damage: probably acts by weakening histone DNA interactions in nucleosomes flanking DSBs. Required for the restoration of heterochromatin organization after replication. Acts at replication sites to facilitate the maintenance of heterochromatin by directing H3 and H4 histones deacetylation, H3 'Lys-9' trimethylation (H3K9me3) and restoration of silencing. The protein is SWI/SNF-related matrix-associated actin-dependent regulator of chromatin subfamily A containing DEAD/H box 1 of Homo sapiens (Human).